The following is a 487-amino-acid chain: Aspyridones efflux protein apdF (487 aa).

Positions 1 to 21 (MSSVRESSKDESIVHPPKAPE) are enriched in basic and acidic residues. The tract at residues 1–25 (MSSVRESSKDESIVHPPKAPESEPF) is disordered. A helical transmembrane segment spans residues 35-55 (VALGAGGVLFCTFGYVNAFGV). N-linked (GlcNAc...) asparagine glycosylation occurs at Asn67. A run of 8 helical transmembrane segments spans residues 75–95 (WIGS…GPLF), 99–119 (GAKV…MTSL), 126–146 (FFLA…APAL), 159–179 (AAMG…PIAL), 191–211 (WAVR…VLGI), 234–254 (VATL…FFYL), 262–282 (GMST…SFFG), and 293–313 (IGPY…TFCW). An N-linked (GlcNAc...) asparagine glycan is attached at Asn319. Helical transmembrane passes span 322 to 342 (IIVF…ITPA), 354 to 374 (IGTY…IGPP), and 385 to 405 (GFLQ…VLAF).

This sequence belongs to the major facilitator superfamily. Monocarboxylate porter (TC 2.A.1.13) family.

Its subcellular location is the cell membrane. Its function is as follows. Efflux pump that may be involved in the secretion of aspyridones. The sequence is that of Aspyridones efflux protein apdF from Emericella nidulans (strain FGSC A4 / ATCC 38163 / CBS 112.46 / NRRL 194 / M139) (Aspergillus nidulans).